The following is a 278-amino-acid chain: DegV domain-containing protein YejH (278 aa).

A DegV domain is found at 3–277; the sequence is IKIVTDSSIT…PGAWAIMIDY (275 aa). The hexadecanoate site is built by T60 and S92.

In terms of biological role, may bind long-chain fatty acids, such as palmitate, and may play a role in lipid transport or fatty acid metabolism. The polypeptide is DegV domain-containing protein YejH (yejH) (Lactococcus lactis subsp. lactis (strain IL1403) (Streptococcus lactis)).